The following is a 142-amino-acid chain: Protein spalt-accessory (142 aa).

Residues 1 to 16 (MKLLIALFALVTAVNA) form the signal peptide. The interval 75–142 (GFAGQGSPNQ…HHEHHGHHRH (68 aa)) is disordered. The segment covering 107 to 124 (GHFHENPHEYPEHHGDHH) has biased composition (basic and acidic residues). Basic residues predominate over residues 125-142 (REHHEHHGHHEHHGHHRH).

The protein resides in the secreted. Functionally, likely to be involved in the establishment of the head. The protein is Protein spalt-accessory (sala) of Drosophila melanogaster (Fruit fly).